The following is a 191-amino-acid chain: Small ribosomal subunit protein uS7 (191 aa).

Positions Asn-56–Leu-80 are disordered.

This sequence belongs to the universal ribosomal protein uS7 family. Part of the 30S ribosomal subunit. Contacts proteins S9 and S11.

One of the primary rRNA binding proteins, it binds directly to 16S rRNA where it nucleates assembly of the head domain of the 30S subunit. Is located at the subunit interface close to the decoding center, probably blocks exit of the E-site tRNA. In Coxiella burnetii (strain RSA 493 / Nine Mile phase I), this protein is Small ribosomal subunit protein uS7.